A 201-amino-acid polypeptide reads, in one-letter code: Cytochrome c biogenesis ATP-binding export protein CcmA (201 aa).

Positions 3–200 (LIAENLGGER…EGAELRMGVA (198 aa)) constitute an ABC transporter domain. Position 35 to 42 (35 to 42 (GPNGSGKS)) interacts with ATP.

This sequence belongs to the ABC transporter superfamily. CcmA exporter (TC 3.A.1.107) family. In terms of assembly, the complex is composed of two ATP-binding proteins (CcmA) and two transmembrane proteins (CcmB).

The protein localises to the cell inner membrane. The enzyme catalyses heme b(in) + ATP + H2O = heme b(out) + ADP + phosphate + H(+). Functionally, part of the ABC transporter complex CcmAB involved in the biogenesis of c-type cytochromes; once thought to export heme, this seems not to be the case, but its exact role is uncertain. Responsible for energy coupling to the transport system. This chain is Cytochrome c biogenesis ATP-binding export protein CcmA, found in Mesorhizobium japonicum (strain LMG 29417 / CECT 9101 / MAFF 303099) (Mesorhizobium loti (strain MAFF 303099)).